Consider the following 891-residue polypeptide: Aconitate hydratase A (891 aa).

Residues Cys-435, Cys-501, and Cys-504 each coordinate [4Fe-4S] cluster.

Belongs to the aconitase/IPM isomerase family. As to quaternary structure, monomer. [4Fe-4S] cluster serves as cofactor.

The enzyme catalyses citrate = D-threo-isocitrate. The catalysed reaction is (2S,3R)-3-hydroxybutane-1,2,3-tricarboxylate = 2-methyl-cis-aconitate + H2O. Its pathway is carbohydrate metabolism; tricarboxylic acid cycle; isocitrate from oxaloacetate: step 2/2. It functions in the pathway organic acid metabolism; propanoate degradation. Functionally, involved in the catabolism of short chain fatty acids (SCFA) via the tricarboxylic acid (TCA)(acetyl degradation route) and probably the 2-methylcitrate cycle I (propionate degradation route). Catalyzes the reversible isomerization of citrate to isocitrate via cis-aconitate. The apo form of AcnA functions as a RNA-binding regulatory protein. Could catalyze the hydration of 2-methyl-cis-aconitate to yield (2R,3S)-2-methylisocitrate. The sequence is that of Aconitate hydratase A (acn) from Legionella pneumophila subsp. pneumophila (strain Philadelphia 1 / ATCC 33152 / DSM 7513).